The primary structure comprises 68 residues: Cytotoxic linear peptide IsCT (68 aa).

The first 23 residues, 1 to 23 (MKTQFAILLVALVLFQMFAQSDA), serve as a signal peptide directing secretion. Phenylalanine amide is present on phenylalanine 36. Residues 40-68 (GLSDLDGLDELFDGEISKADRDFLRELMR) constitute a propeptide that is removed on maturation.

Belongs to the non-disulfide-bridged peptide (NDBP) superfamily. Short antimicrobial peptide (group 4) family. IsCTf is an enzymatic proteolytic cleavage product of IsCT by the proteases present in the venom. In terms of tissue distribution, expressed by the venom gland.

The protein localises to the secreted. It is found in the target cell membrane. Functionally, shows weak hemolytic activity and antibacterial activity against both Gram-positive and Gram-negative bacteria probably by forming pores in the cell membrane. IsCT adopts an amphipathic alpha-helical structure. Its function is as follows. Shows neither hemolytic, nor antibacterial activities, probably because it cannot adopt amphipathic alpha-helical structure. The chain is Cytotoxic linear peptide IsCT from Opisthacanthus madagascariensis (Scorpion).